The chain runs to 258 residues: 3-deoxy-manno-octulosonate cytidylyltransferase (258 aa).

This sequence belongs to the KdsB family.

It localises to the cytoplasm. It carries out the reaction 3-deoxy-alpha-D-manno-oct-2-ulosonate + CTP = CMP-3-deoxy-beta-D-manno-octulosonate + diphosphate. Its pathway is nucleotide-sugar biosynthesis; CMP-3-deoxy-D-manno-octulosonate biosynthesis; CMP-3-deoxy-D-manno-octulosonate from 3-deoxy-D-manno-octulosonate and CTP: step 1/1. The protein operates within bacterial outer membrane biogenesis; lipopolysaccharide biosynthesis. Activates KDO (a required 8-carbon sugar) for incorporation into bacterial lipopolysaccharide in Gram-negative bacteria. The sequence is that of 3-deoxy-manno-octulosonate cytidylyltransferase from Parvibaculum lavamentivorans (strain DS-1 / DSM 13023 / NCIMB 13966).